The following is a 161-amino-acid chain: 3-isopropylmalate dehydratase small subunit (161 aa).

Belongs to the LeuD family. LeuD type 2 subfamily. In terms of assembly, heterodimer of LeuC and LeuD.

The enzyme catalyses (2R,3S)-3-isopropylmalate = (2S)-2-isopropylmalate. It participates in amino-acid biosynthesis; L-leucine biosynthesis; L-leucine from 3-methyl-2-oxobutanoate: step 2/4. Catalyzes the isomerization between 2-isopropylmalate and 3-isopropylmalate, via the formation of 2-isopropylmaleate. The sequence is that of 3-isopropylmalate dehydratase small subunit from Clostridium beijerinckii (strain ATCC 51743 / NCIMB 8052) (Clostridium acetobutylicum).